A 144-amino-acid chain; its full sequence is MSKERTRCREKVLQLLFQKDLGQEVEVDFSDFSPQGQAFAYRLYDGALQYKDLADSIISRFSKNWKLERMGALERNILRLAIAEMFTFSDIPQAVTVNEAVELAKKYVSPEAGRFVNGILRNIVRNWEEVKSLKEGFVDVTPEN.

It belongs to the NusB family.

In terms of biological role, involved in transcription antitermination. Required for transcription of ribosomal RNA (rRNA) genes. Binds specifically to the boxA antiterminator sequence of the ribosomal RNA (rrn) operons. This Dictyoglomus thermophilum (strain ATCC 35947 / DSM 3960 / H-6-12) protein is Transcription antitermination protein NusB.